The sequence spans 622 residues: Auxin response factor 11 (622 aa).

The segment at residues 145–247 (FVKILTASDT…DLRVGVRRLA (103 aa)) is a DNA-binding region (TF-B3). Disordered stretches follow at residues 358-398 (SIQR…ISEI) and 483-513 (SNIS…TRSR). Composition is skewed to polar residues over residues 376–387 (SALTPTPTQQQS) and 483–511 (SNIS…TSTR). Positions 511 to 594 (RSRIKVQMQG…KKLFIYPSDE (84 aa)) constitute a PB1 domain.

Belongs to the ARF family. Homodimers and heterodimers.

Its subcellular location is the nucleus. Its function is as follows. Auxin response factors (ARFs) are transcriptional factors that bind specifically to the DNA sequence 5'-TGTCTC-3' found in the auxin-responsive promoter elements (AuxREs). Could act as transcriptional activator or repressor. Formation of heterodimers with Aux/IAA proteins may alter their ability to modulate early auxin response genes expression. This Arabidopsis thaliana (Mouse-ear cress) protein is Auxin response factor 11 (ARF11).